The following is a 353-amino-acid chain: 26S proteasome non-ATPase regulatory subunit 8 (353 aa).

Residues 1-25 form a disordered region; sequence MFIKGRAAKTPRGEPRRSSRGGRKL. The 170-residue stretch at 165 to 334 folds into the PCI domain; that stretch reads PSFERYMAQL…QQKPEDSTIP (170 aa). A Glycyl lysine isopeptide (Lys-Gly) (interchain with G-Cter in SUMO2) cross-link involves residue K300.

The protein belongs to the proteasome subunit S14 family. Component of the 19S proteasome regulatory particle complex. The 26S proteasome consists of a 20S core particle (CP) and two 19S regulatory subunits (RP). The regulatory particle is made of a lid composed of 9 subunits including PSMD8, a base containing 6 ATPases and few additional components. Interacts with DDI2. Interacts with TASOR. As to expression, expressed in the Sertoli cells of the testis.

Its function is as follows. Component of the 26S proteasome, a multiprotein complex involved in the ATP-dependent degradation of ubiquitinated proteins. This complex plays a key role in the maintenance of protein homeostasis by removing misfolded or damaged proteins, which could impair cellular functions, and by removing proteins whose functions are no longer required. Therefore, the proteasome participates in numerous cellular processes, including cell cycle progression, apoptosis, or DNA damage repair. In Mus musculus (Mouse), this protein is 26S proteasome non-ATPase regulatory subunit 8 (Psmd8).